The following is a 183-amino-acid chain: uncharacterized protein (183 aa).

A disordered region spans residues 1-23; sequence MGSSFVIDRSSSSPAPPRGPAPK.

This is an uncharacterized protein from Saccharomyces cerevisiae (strain ATCC 204508 / S288c) (Baker's yeast).